The chain runs to 1037 residues: Huntingtin-interacting protein 1 (1037 aa).

In terms of domain architecture, ENTH spans 32-160; it reads ERESFERTQT…EYHTKNPRFP (129 aa). Serine 338 is modified (phosphoserine). Residues 368-644 are a coiled coil; sequence VNKDEKDHLI…IQDALNQLEE (277 aa). Residues 410–491 form a pDED region; sequence SELEADLAEQ…HADLLRKNAE (82 aa). Positions 771 to 1012 constitute an I/LWEQ domain; the sequence is GLDIKQEELG…ELRKKHYELA (242 aa). The tract at residues 867–924 is important for actin binding; the sequence is RWTEGLISASKAVGWGATVMVDAADLVVQGRGKFEELMVCSHEIAASTAQLVAASKVK. A disordered region spans residues 1017 to 1037; that stretch reads GWEEGTEASPPTLQEVVTEKE.

It belongs to the SLA2 family. As to quaternary structure, homodimer. Binds actin. Binds HTT (via N-terminus). This interaction is restricted to the brain. Binds to IFT57. In normal conditions, it poorly interacts with IFT57, HIP1 being strongly associated with HTT. However, in mutant HTT proteins with a long poly-Gln region, interaction between HTT and HIP1 is inhibited, promoting the interaction between HIP1 and IFT57. Interacts with CLTB (via N-terminus). Interacts (via coiled coil domain) with AR. Interacts with AP2A1, AP2A2, CLTC and HIP1R. Interacts with GRIA1, GRIN2A and GRIN2B. In terms of tissue distribution, ubiquitously expressed with the highest level in brain. Expression is up-regulated in prostate and colon cancer.

The protein localises to the cytoplasm. Its subcellular location is the nucleus. It localises to the endomembrane system. The protein resides in the cytoplasmic vesicle. It is found in the clathrin-coated vesicle membrane. Its function is as follows. Plays a role in clathrin-mediated endocytosis and trafficking. Involved in regulating AMPA receptor trafficking in the central nervous system in an NMDA-dependent manner. Regulates presynaptic nerve terminal activity. Enhances androgen receptor (AR)-mediated transcription. May act as a proapoptotic protein that induces cell death by acting through the intrinsic apoptosis pathway. Binds 3-phosphoinositides (via ENTH domain). May act through the ENTH domain to promote cell survival by stabilizing receptor tyrosine kinases following ligand-induced endocytosis. May play a functional role in the cell filament networks. May be required for differentiation, proliferation, and/or survival of somatic and germline progenitors. In Homo sapiens (Human), this protein is Huntingtin-interacting protein 1 (HIP1).